Here is a 334-residue protein sequence, read N- to C-terminus: Gap junction alpha-2 protein (334 aa).

Residues 1–12 (MAGWELLKLLLD) lie on the Cytoplasmic side of the membrane. Residues 13-35 (DVQEHSTLIGKVWLTVLFIFRIF) form a helical membrane-spanning segment. Over 36 to 75 (ILSVAGESVWTDEQSDFICNTQQPGCTNVCYDQAFPISHV) the chain is Extracellular. A helical transmembrane segment spans residues 76-98 (RYWVLQFLFVSTPTLIYLGHMVY). Residues 99–153 (LSKKEEKERQKENESRILVANEAQTEVHSSATKKIRIQGPLMCTYTTSVVFKSIF) are Cytoplasmic-facing. Residues 154–176 (EAGFLLGQWYIYGFVMSPIFVCE) traverse the membrane as a helical segment. The Extracellular portion of the chain corresponds to 177 to 207 (RIPCKHKVECFVSRPMEKTIFIIFMLVVSLI). Residues 208 to 230 (SLLLNLMELIHLSFKCFQHGIKE) traverse the membrane as a helical segment. The Cytoplasmic segment spans residues 231 to 334 (GATCSPTGIP…HQTSSKQQYV (104 aa)).

This sequence belongs to the connexin family. Alpha-type (group II) subfamily. In terms of assembly, a connexon is composed of a hexamer of connexins. Resides primarily in the ovary, oocytes and early embryos.

It is found in the cell membrane. The protein resides in the cell junction. The protein localises to the gap junction. In terms of biological role, one gap junction consists of a cluster of closely packed pairs of transmembrane channels, the connexons, through which materials of low MW diffuse from one cell to a neighboring cell. This is Gap junction alpha-2 protein (gja2) from Xenopus laevis (African clawed frog).